A 365-amino-acid chain; its full sequence is Galactoside alpha-(1,2)-fucosyltransferase 1 (365 aa).

The Cytoplasmic segment spans residues 1–8; the sequence is MWPLSHRH. The helical; Signal-anchor for type II membrane protein transmembrane segment at 9-25 threads the bilayer; that stretch reads LCLAFLLVCVLSAISFF. At 26–365 the chain is on the lumenal side; sequence LHIYQDSIRH…LSSLWTLAEP (340 aa). N-linked (GlcNAc...) asparagine glycosylation is found at N65, N301, and N327.

It belongs to the glycosyltransferase 11 family.

The protein resides in the golgi apparatus. It localises to the golgi stack membrane. The catalysed reaction is a beta-D-galactosyl-(1-&gt;4)-N-acetyl-beta-D-glucosaminyl derivative + GDP-beta-L-fucose = an alpha-L-Fuc-(1-&gt;2)-beta-D-Gal-(1-&gt;4)-beta-D-GlcNAc derivative + GDP + H(+). The enzyme catalyses a ganglioside GA1 + GDP-beta-L-fucose = a ganglioside Fuc-GA1 + GDP + H(+). It carries out the reaction a beta-D-Gal-(1-&gt;3)-beta-D-GlcNAc-(1-&gt;3)-beta-D-Gal-(1-&gt;4)-beta-D-Glc-(1&lt;-&gt;1')-Cer(d18:1(4E)) + GDP-beta-L-fucose = alpha-L-fucosyl-(1-&gt;2)- beta-D-galactosyl-(1-&gt;3)-N-acetyl-beta-D-glucosaminyl-(1-&gt;3)-beta-D-galactosyl-(1-&gt;4)-beta-D-glucosyl-(1&lt;-&gt;1')-N-acylsphing-4-enine + GDP + H(+). It catalyses the reaction a neolactoside nLc4Cer(d18:1(4E)) + GDP-beta-L-fucose = a neolactoside IV(2)-alpha-Fuc-nLc4Cer(d18:1(4E)) + GDP + H(+). The catalysed reaction is a ganglioside GM1 + GDP-beta-L-fucose = a ganglioside Fuc-GM1 + GDP + H(+). The enzyme catalyses beta-D-galactosyl-(1-&gt;3)-N-acetyl-D-galactosamine + GDP-beta-L-fucose = alpha-L-fucosyl-(1-&gt;2)-beta-D-galactosyl-(1-&gt;3)-N-acetyl-D-galactosamine + GDP + H(+). The protein operates within protein modification; protein glycosylation. Catalyzes the transfer of L-fucose, from a guanosine diphosphate-beta-L-fucose, to the terminal galactose residue of glycoconjugates through an alpha(1,2) linkage leading to H antigen synthesis that is an intermediate substrate in the synthesis of ABO blood group antigens. H antigen is essential for maturation of the glomerular layer of the main olfactory bulb, in cell migration and early cell-cell contacts during tumor associated angiogenesis. Preferentially fucosylates soluble lactose and to a lesser extent fucosylates glycolipids gangliosides GA1 and GM1a. The chain is Galactoside alpha-(1,2)-fucosyltransferase 1 from Leontocebus fuscicollis (Brown-mantled tamarin).